Reading from the N-terminus, the 373-residue chain is UDP-N-acetylglucosamine--N-acetylmuramyl-(pentapeptide) pyrophosphoryl-undecaprenol N-acetylglucosamine transferase (373 aa).

Residues 10–12 (TGG), Asn-124, Ser-195, and Gln-297 contribute to the UDP-N-acetyl-alpha-D-glucosamine site.

It belongs to the glycosyltransferase 28 family. MurG subfamily.

The protein localises to the cell membrane. The catalysed reaction is Mur2Ac(oyl-L-Ala-gamma-D-Glu-L-Lys-D-Ala-D-Ala)-di-trans,octa-cis-undecaprenyl diphosphate + UDP-N-acetyl-alpha-D-glucosamine = beta-D-GlcNAc-(1-&gt;4)-Mur2Ac(oyl-L-Ala-gamma-D-Glu-L-Lys-D-Ala-D-Ala)-di-trans,octa-cis-undecaprenyl diphosphate + UDP + H(+). It functions in the pathway cell wall biogenesis; peptidoglycan biosynthesis. Cell wall formation. Catalyzes the transfer of a GlcNAc subunit on undecaprenyl-pyrophosphoryl-MurNAc-pentapeptide (lipid intermediate I) to form undecaprenyl-pyrophosphoryl-MurNAc-(pentapeptide)GlcNAc (lipid intermediate II). In Oenococcus oeni (strain ATCC BAA-331 / PSU-1), this protein is UDP-N-acetylglucosamine--N-acetylmuramyl-(pentapeptide) pyrophosphoryl-undecaprenol N-acetylglucosamine transferase.